We begin with the raw amino-acid sequence, 305 residues long: Cytochrome c biogenesis protein CcsA (305 aa).

A run of 8 helical transmembrane segments spans residues 11–31, 37–57, 63–83, 96–116, 141–161, 212–232, 246–263, and 275–295; these read GLGF…FWAV, TGIV…QLVL, GHFP…ACTL, IVAA…SFAL, VIMV…AVLL, TITV…VWAN, TWAL…HTRL, and VAVV…LLGI.

The protein belongs to the CcmF/CycK/Ccl1/NrfE/CcsA family. As to quaternary structure, may interact with ccs1.

Its subcellular location is the cellular thylakoid membrane. Required during biogenesis of c-type cytochromes (cytochrome c6 and cytochrome f) at the step of heme attachment. The polypeptide is Cytochrome c biogenesis protein CcsA (Parasynechococcus marenigrum (strain WH8102)).